A 220-amino-acid polypeptide reads, in one-letter code: Recombination protein RecR (220 aa).

The segment at C57–C72 adopts a C4-type zinc-finger fold. The Toprim domain maps to R80–P173. The disordered stretch occupies residues L190–R220.

This sequence belongs to the RecR family.

May play a role in DNA repair. It seems to be involved in an RecBC-independent recombinational process of DNA repair. It may act with RecF and RecO. In Deinococcus radiodurans (strain ATCC 13939 / DSM 20539 / JCM 16871 / CCUG 27074 / LMG 4051 / NBRC 15346 / NCIMB 9279 / VKM B-1422 / R1), this protein is Recombination protein RecR.